Consider the following 398-residue polypeptide: uncharacterized protein (398 aa).

The protein belongs to the class-V pyridoxal-phosphate-dependent aminotransferase family. In terms of assembly, homodimer.

Its function is as follows. Is essential for optimal growth. This is an uncharacterized protein from Mycobacterium tuberculosis (strain CDC 1551 / Oshkosh).